The chain runs to 118 residues: Large ribosomal subunit protein uL18 (118 aa).

The protein belongs to the universal ribosomal protein uL18 family. In terms of assembly, part of the 50S ribosomal subunit; part of the 5S rRNA/L5/L18/L25 subcomplex. Contacts the 5S and 23S rRNAs.

This is one of the proteins that bind and probably mediate the attachment of the 5S RNA into the large ribosomal subunit, where it forms part of the central protuberance. This is Large ribosomal subunit protein uL18 from Ligilactobacillus salivarius (strain UCC118) (Lactobacillus salivarius).